A 68-amino-acid polypeptide reads, in one-letter code: Adipokinetic prohormone type 1 (68 aa).

The N-terminal stretch at 1–20 (MNYVSIFVLIVACLCVLADA) is a signal peptide. Glutamine 21 is modified (pyrrolidone carboxylic acid). The residue at position 30 (glycine 30) is a Glycine amide. The propeptide occupies 34 to 68 (GAVAATMSCRSEETIAAIYKLIQNEAERLLLCQKP).

As to expression, expressed in antennal lobe (AL), corpora cardiaca (CC), corpora allata (CA) and gnathal ganglion (GNG) (at protein level). Expression in CC and CA detected in all animals, expression in GNG in some animals and in AL in few animals (at protein level).

It is found in the secreted. This hormone, released from cells in the corpora cardiaca, causes release of diglycerides from the fat body and stimulation of muscles to use these diglycerides as an energy source during energy-demanding processes. This Agrotis ipsilon (Black cutworm moth) protein is Adipokinetic prohormone type 1.